The primary structure comprises 1273 residues: ABC transporter B family member 2 (1273 aa).

Residues 1 to 30 (MYISLIFFLSNHFPPLISIPIFIFLSFSSP) form the signal peptide. A run of 7 helical transmembrane segments spans residues 66–86 (FSFA…GACI), 91–111 (VPIF…AYLF), 126–146 (FVYL…CWMH), 209–229 (FIAG…VTLS), 230–250 (IVPL…GLIA), 305–325 (GLGL…LVWF), and 345–365 (LNVV…SAFV). The ABC transmembrane type-1 1 domain occupies 77–366 (MTLGSVGACI…AAPDISAFVR (290 aa)). An ABC transporter 1 domain is found at 401–637 (IQFKDATFSY…PDGAYSSLLR (237 aa)). 436–443 (GGSGSGKS) lines the ATP pocket. N-linked (GlcNAc...) asparagine glycans are attached at residues asparagine 466 and asparagine 651. Positions 710-997 (GVCGTICAFI…TLALAPDLLK (288 aa)) constitute an ABC transmembrane type-1 2 domain. Helical transmembrane passes span 711–731 (VCGT…ALGV) and 752–772 (IAIL…IEHI). A glycan (N-linked (GlcNAc...) asparagine) is linked at asparagine 806. Helical transmembrane passes span 832 to 852 (ILLQ…ILNW), 934 to 954 (IAGL…GLAL), and 975 to 995 (FMVL…APDL). Residues 1030–1266 (IELKGVHFSY…KSGPYFKLIS (237 aa)) form the ABC transporter 2 domain. 1065–1072 (GQSGSGKS) is a binding site for ATP. Residues asparagine 1217 and asparagine 1256 are each glycosylated (N-linked (GlcNAc...) asparagine).

This sequence belongs to the ABC transporter superfamily. ABCB family. Multidrug resistance exporter (TC 3.A.1.201) subfamily. As to quaternary structure, interacts with 1-naphthylphthalamic acid (NPA).

The protein resides in the membrane. The chain is ABC transporter B family member 2 (ABCB2) from Arabidopsis thaliana (Mouse-ear cress).